A 288-amino-acid chain; its full sequence is 33 kDa chaperonin (288 aa).

Cystine bridges form between Cys225–Cys227 and Cys258–Cys261.

It belongs to the HSP33 family. In terms of processing, under oxidizing conditions two disulfide bonds are formed involving the reactive cysteines. Under reducing conditions zinc is bound to the reactive cysteines and the protein is inactive.

Its subcellular location is the cytoplasm. Redox regulated molecular chaperone. Protects both thermally unfolding and oxidatively damaged proteins from irreversible aggregation. Plays an important role in the bacterial defense system toward oxidative stress. This Shewanella denitrificans (strain OS217 / ATCC BAA-1090 / DSM 15013) protein is 33 kDa chaperonin.